The following is a 261-amino-acid chain: Hydroxyethylthiazole kinase (261 aa).

Residue methionine 40 participates in substrate binding. 2 residues coordinate ATP: lysine 116 and threonine 162. Glycine 189 lines the substrate pocket.

The protein belongs to the Thz kinase family. The cofactor is Mg(2+).

The enzyme catalyses 5-(2-hydroxyethyl)-4-methylthiazole + ATP = 4-methyl-5-(2-phosphooxyethyl)-thiazole + ADP + H(+). It functions in the pathway cofactor biosynthesis; thiamine diphosphate biosynthesis; 4-methyl-5-(2-phosphoethyl)-thiazole from 5-(2-hydroxyethyl)-4-methylthiazole: step 1/1. Catalyzes the phosphorylation of the hydroxyl group of 4-methyl-5-beta-hydroxyethylthiazole (THZ). This is Hydroxyethylthiazole kinase from Methanosarcina mazei (strain ATCC BAA-159 / DSM 3647 / Goe1 / Go1 / JCM 11833 / OCM 88) (Methanosarcina frisia).